The primary structure comprises 525 residues: Signal recognition particle protein (525 aa).

Residues 107–114 (GLQGSGKT), 196–200 (DTAGR), and 254–257 (TKLD) each bind GTP. A disordered region spans residues 437-525 (GMGIPGIGRK…LSKLKFPGKK (89 aa)). A compositionally biased stretch (basic residues) spans 447–467 (SATRKSKGAKGKSGKKSKKGT). A compositionally biased stretch (low complexity) spans 480–497 (GVPGMPGLAGLPGGLPDL).

Belongs to the GTP-binding SRP family. SRP54 subfamily. Part of the signal recognition particle protein translocation system, which is composed of SRP and FtsY.

The protein localises to the cytoplasm. The catalysed reaction is GTP + H2O = GDP + phosphate + H(+). Functionally, involved in targeting and insertion of nascent membrane proteins into the cytoplasmic membrane. Binds to the hydrophobic signal sequence of the ribosome-nascent chain (RNC) as it emerges from the ribosomes. The SRP-RNC complex is then targeted to the cytoplasmic membrane where it interacts with the SRP receptor FtsY. The polypeptide is Signal recognition particle protein (Mycobacterium bovis (strain ATCC BAA-935 / AF2122/97)).